A 27-amino-acid polypeptide reads, in one-letter code: uncharacterized protein (27 aa).

It localises to the mitochondrion. This is an uncharacterized protein from Emericella nidulans (Aspergillus nidulans).